The chain runs to 159 residues: 3-dehydroquinate dehydratase (159 aa).

The Proton acceptor role is filled by tyrosine 22. Residues asparagine 73, histidine 79, and aspartate 86 each coordinate substrate. The Proton donor role is filled by histidine 99. Residues 100 to 101 (IS) and arginine 110 contribute to the substrate site.

Belongs to the type-II 3-dehydroquinase family. Homododecamer.

The enzyme catalyses 3-dehydroquinate = 3-dehydroshikimate + H2O. It participates in metabolic intermediate biosynthesis; chorismate biosynthesis; chorismate from D-erythrose 4-phosphate and phosphoenolpyruvate: step 3/7. Catalyzes a trans-dehydration via an enolate intermediate. This is 3-dehydroquinate dehydratase from Campylobacter jejuni subsp. jejuni serotype O:6 (strain 81116 / NCTC 11828).